A 962-amino-acid chain; its full sequence is RNA-binding protein 15 (962 aa).

Basic and acidic residues-rich tracts occupy residues 1-10, 34-52, and 59-72; these read MRSAGREPLP, LRRD…ERSP, and RGGE…ERSK. Residues 1 to 167 form a disordered region; the sequence is MRSAGREPLP…SAPGGGDGVE (167 aa). Positions 82–94 are enriched in low complexity; that stretch reads GSSSGKTDSGGSR. The span at 97 to 112 shows a compositional bias: basic and acidic residues; that stretch reads LHLDKSSSRGGSREYE. The residue at position 108 (Ser108) is a Phosphoserine. Low complexity predominate over residues 118–129; that stretch reads SSSRLHSYSSPS. Residues 134–149 show a composition bias toward gly residues; it reads SGGGESRSSSRGGGGE. Low complexity predominate over residues 150-159; the sequence is SRSSGAASSA. The RRM 1 domain maps to 169–251; it reads KTLKISELGS…RPLKIEAVYV (83 aa). Phosphoserine is present on residues Ser178, Ser207, and Ser209. Lys245 is covalently cross-linked (Glycyl lysine isopeptide (Lys-Gly) (interchain with G-Cter in SUMO2)). A phosphoserine mark is found at Ser252, Ser256, and Ser258. Residues 257–297 form a disordered region; the sequence is RSPLDKDAYAPSSSVVGTSVGSHRHAPGGGGGQRSLSPGGA. A Phosphotyrosine modification is found at Tyr265. A compositionally biased stretch (low complexity) spans 268-277; it reads SSSVVGTSVG. Phosphoserine occurs at positions 291, 293, and 364. RRM domains follow at residues 373 to 450 and 454 to 528; these read RTLF…YGKA and TRLW…FADT. Residues Lys405, Lys419, and Lys444 each participate in a glycyl lysine isopeptide (Lys-Gly) (interchain with G-Cter in SUMO2) cross-link. Lys449 bears the N6-acetyllysine mark. 2 stretches are compositionally biased toward basic and acidic residues: residues 553–580 and 612–661; these read GHRA…RDLY and SLDR…SERP. Residues 553-779 form a disordered region; it reads GHRAPDPLRS…KQDGGTAPVA (227 aa). Residue Thr567 is modified to Phosphothreonine. The residue at position 577 (Arg577) is an Asymmetric dimethylarginine; alternate; by PRMT1. Arg577 bears the Omega-N-methylarginine; alternate; by PRMT1 mark. Residues Ser621, Ser655, Ser670, Ser674, and Ser701 each carry the phosphoserine modification. Basic and acidic residues-rich tracts occupy residues 673–692, 701–729, and 742–751; these read RSPE…DRSS, SPVR…AERD, and NPLKKEDRSD. Lys745 is covalently cross-linked (Glycyl lysine isopeptide (Lys-Gly) (interchain with G-Cter in SUMO2)). Residues 754-771 show a composition bias toward low complexity; it reads APSASTSSSKQKPPSQKQ. Residues Ser768 and Ser782 each carry the phosphoserine modification. The 180-residue stretch at 778 to 957 folds into the SPOC domain; that stretch reads VAASSPKLCL…YLVMIIVRAK (180 aa). A disordered region spans residues 866-885; the sequence is GSSDSRSSSSSATSDTAAST. Low complexity predominate over residues 867 to 885; sequence SSDSRSSSSSATSDTAAST. A Phosphoserine modification is found at Ser936.

It belongs to the RRM Spen family. As to quaternary structure, component of the WMM complex, a N6-methyltransferase complex composed of a catalytic subcomplex, named MAC, and of an associated subcomplex, named MACOM. The MAC subcomplex is composed of METTL3 and METTL14. The MACOM subcomplex is composed of WTAP, ZC3H13, CBLL1/HAKAI, VIRMA, and, in some cases of RBM15 (RBM15 or RBM15B). Also a component of a MACOM-like complex, named WTAP complex, composed of WTAP, ZC3H13, CBLL1, VIRMA, RBM15, BCLAF1 and THRAP3. Interacts with RBPJ. Interacts (via SPOC domain) with SETD1B. Interacts with NXF1, the interaction is required to promote mRNA export. Interacts with SF3B1. Methylated at Arg-577 by PRMT1, leading to promote ubiquitination by CNOT4 and subsequent degradation by the proteasome. In terms of processing, ubiquitinated by CNOT4 following methylation at Arg-577 by PRMT1.

It localises to the nucleus speckle. The protein localises to the nucleus. It is found in the nucleoplasm. The protein resides in the nucleus envelope. Its subcellular location is the nucleus membrane. In terms of biological role, RNA-binding protein that acts as a key regulator of N6-methyladenosine (m6A) methylation of RNAs, thereby regulating different processes, such as hematopoietic cell homeostasis, alternative splicing of mRNAs and X chromosome inactivation mediated by Xist RNA. Associated component of the WMM complex, a complex that mediates N6-methyladenosine (m6A) methylation of RNAs, a modification that plays a role in the efficiency of mRNA splicing and RNA processing. Plays a key role in m6A methylation, possibly by binding target RNAs and recruiting the WMM complex. Involved in random X inactivation mediated by Xist RNA: acts by binding Xist RNA and recruiting the WMM complex, which mediates m6A methylation, leading to target YTHDC1 reader on Xist RNA and promoting transcription repression activity of Xist. Required for the development of multiple tissues, such as the maintenance of the homeostasis of long-term hematopoietic stem cells and for megakaryocyte (MK) and B-cell differentiation. Regulates megakaryocyte differentiation by regulating alternative splicing of genes important for megakaryocyte differentiation; probably regulates alternative splicing via m6A regulation. Required for placental vascular branching morphogenesis and embryonic development of the heart and spleen. Acts as a regulator of thrombopoietin response in hematopoietic stem cells by regulating alternative splicing of MPL. May also function as an mRNA export factor, stimulating export and expression of RTE-containing mRNAs which are present in many retrotransposons that require to be exported prior to splicing. High affinity binding of pre-mRNA to RBM15 may allow targeting of the mRNP to the export helicase DBP5 in a manner that is independent of splicing-mediated NXF1 deposition, resulting in export prior to splicing. May be implicated in HOX gene regulation. The chain is RNA-binding protein 15 from Mus musculus (Mouse).